Here is a 260-residue protein sequence, read N- to C-terminus: Cytosolic Fe-S cluster assembly factor Nubp2 homolog (260 aa).

Residue 14-21 (GKGGVGKS) participates in ATP binding. [4Fe-4S] cluster is bound by residues C188 and C191.

The protein belongs to the Mrp/NBP35 ATP-binding proteins family. NUBP2/CFD1 subfamily. Heterotetramer of 2 Nubp1 and 2 Nubp2 chains. [4Fe-4S] cluster serves as cofactor.

It is found in the cytoplasm. Its function is as follows. Component of the cytosolic iron-sulfur (Fe/S) protein assembly (CIA) machinery. Required for maturation of extramitochondrial Fe-S proteins. The Nubp1-Nubp2 heterotetramer forms a Fe-S scaffold complex, mediating the de novo assembly of an Fe-S cluster and its transfer to target apoproteins. The sequence is that of Cytosolic Fe-S cluster assembly factor Nubp2 homolog from Drosophila simulans (Fruit fly).